The following is a 128-amino-acid chain: DNA polymerase epsilon subunit 3 (128 aa).

The segment covering 98-110 (EKKESKASKKDSN) has biased composition (basic and acidic residues). The tract at residues 98–128 (EKKESKASKKDSNTAENANASATATAEEAPE) is disordered. The segment covering 111–128 (TAENANASATATAEEAPE) has biased composition (low complexity).

Homodimer. Component of the DNA polymerase epsilon complex consisting of four subunits: the catalytic subunit PolE1/DNApol-epsilon255 and the accessory subunits PolE2/DNApol-epsilon58, Chrac-14/DNApolE3 and PolE4. Component of the chromatin accessibility complex (CHRAC), composed of Chrac-14, Chrac-16, Acf and Iswi. Forms an heterodimer with Chrac-16. The Chrac-14/Chrac-16 heterodimer interacts with Acf (via N-terminus). Interacts directly with Iswi and this interaction is further stabilized by association with Chrac-16. Component of the Ada2a-containing (ATAC) complex composed of at least Ada2a, Atac1, Hcf, Ada3, Gcn5, Mocs2B, Charac-14, Atac3, Atac2, NC2beta and wds. Interacts with cid.

It is found in the nucleus. In terms of biological role, accessory component of the DNA polymerase epsilon complex. Participates in DNA repair and in chromosomal DNA replication. Histone-like protein which promotes nucleosome sliding of ATP-dependent nucleosome remodeling complexes. Part of the chromatin-accessibility complex (CHRAC) which uses energy/ATP to increase the general accessibility of DNA in chromatin. As a heterodimer with Chrac-16, binds DNA and facilitates nucleosome sliding by Acf. Has a role in DNA damage response by preventing cid mislocalization to chromatin. The polypeptide is DNA polymerase epsilon subunit 3 (Drosophila melanogaster (Fruit fly)).